A 1319-amino-acid chain; its full sequence is Girdin homolog (1319 aa).

Positions 6–118 constitute a Calponin-homology (CH) domain; that stretch reads ENWSHPLAFW…KLLLLLLGCA (113 aa). Coiled coils occupy residues 141 to 173, 218 to 690, and 732 to 1096; these read ELAACIQKLTESDEIVQNLEDFERRKMKETDEV, TSEL…ADLI, and KRER…KKST. The segment at 166–222 is disordered; it reads KMKETDEVGGGGGSIEDVDSDDMESSTTSSSNGEIAIKQQDQSFLMSRSTSPTSELR. Polar residues predominate over residues 204–222; sequence QQDQSFLMSRSTSPTSELR. 2 disordered regions span residues 1112 to 1236 and 1289 to 1308; these read INRR…SPAH and NVNLPQNPPDLPENSDLKPN. Positions 1118–1131 are enriched in polar residues; sequence TSNGGSTTEDSSVY.

This sequence belongs to the CCDC88 family. Expressed in AQR and PQR gas-sensing neurons in hermaphrodites (at protein level).

The protein resides in the cytoplasm. It localises to the cytoskeleton. Its subcellular location is the cilium basal body. The protein localises to the microtubule organizing center. It is found in the centrosome. The protein resides in the centriole. Scaffolding protein that plays a role in ciliogenesis, cilium positioning and dendrite anchoring in sensory amphid neurons including AWB, AWA, AWC, ADL and ASI, the phasmid neurons PHA and PHB and the gas sensing neurons AQR, PQR, URX and BAG. Its role in cilium positioning may be through regulation of the localization of cell adhesion proteins such as the apical junction protein ajm-1, and the ciliary scaffolding protein Rootletin/che-10. Plays a more prominent role in regulating dendrite morphogenesis in AQR than in PQR neurons. Regulates localization of hmr-1 to the distal AQR dendrite. During embryonic elongation, required for the anchoring of URX and BAG dendrites to the presumptive nose. This is Girdin homolog from Caenorhabditis elegans.